The chain runs to 547 residues: MEAGGDTAAPVPGGAEDLEDTQFPSEETREGGGVHAVPLDPEGEGLEETGSKDKDQPPSPSPPPQSEAPSSTSRLWSPAAPENSPTRSPESSSGGQGGDPSDEEWRSQRKHVFVLSEAGKPIYLRYGSVEALSATMGVMTALVSFVQSAGDTIRAIYAEDHKLVFLQQGPLLLVAMSRTSQSAAQLRGELLAVHAQIVSTLTRASVARIFAHKQNYDLRRLLAGSERTLDRLLDSVEQDPGALLLGAVRCVPLARPLRDALGALLRRCTAPGLALSVLAVGGRLITAAQERNVLAECRLDPADLQLLLDWVGAPAFAAGEAWAPVCLPRFNPDGFFYAYVARLDAMPVCLLLLGTQREAFHAMAACRRLVEDGMHALGAMRVLGEAAGFSNASSASAPAYSVQAVGAPGLRHFLYKPLDIPDHHRQLPQFTSPELEAPYSREEERQRLSDLYHRLHARLHNTSRPLRLIYHVAEKETLLAWVTSKFELYTCLSPLVTKAGAILVVTKLLRWVKKEEDRLFIRYPPKYSTPPAPSTDQAAHNGLFTGL.

Methionine 1 carries the post-translational modification N-acetylmethionine. Positions methionine 1–arginine 106 are disordered. The segment covering proline 57–serine 66 has biased composition (pro residues). Phosphoserine is present on residues serine 59 and serine 61.

Belongs to the MON1/SAND family. In terms of assembly, interacts with CCNT2; down-regulates CCNT2-mediated activation of viral promoters during herpes simplex virus 1/HHV-1 infection. Found in a complex with RMC1, CCZ1 MON1A and MON1B.

The chain is Vacuolar fusion protein MON1 homolog B (MON1B) from Macaca fascicularis (Crab-eating macaque).